Reading from the N-terminus, the 165-residue chain is Fimbrial protein (165 aa).

An N-terminal signal peptide occupies residues Met-1–Ala-21.

It localises to the fimbrium. In terms of biological role, structural subunit of the sef14 fimbriae. The sequence is that of Fimbrial protein (sefA) from Salmonella enteritidis.